A 486-amino-acid chain; its full sequence is 3-dehydroshikimate dehydratase (486 aa).

The catalysed reaction is 3-dehydroshikimate = 3,4-dihydroxybenzoate + H2O. It participates in aromatic compound metabolism; 3,4-dihydroxybenzoate biosynthesis; 3,4-dihydroxybenzoate from 3-dehydroquinate: step 2/2. Its function is as follows. Converts dehydroshikimate to protocatechuate. The sequence is that of 3-dehydroshikimate dehydratase (quiC) from Acinetobacter baylyi (strain ATCC 33305 / BD413 / ADP1).